A 1072-amino-acid chain; its full sequence is MLGDGNEGMSTIPGFNQIQFEGFCRFIDQGLTEELIKFPKIEDTDQEIEFQLFVETYQLVEPLIKERDAVYESLTYSSELYVSAGLIWKTSRDMQEQTLFIGNIPLMNSLGTSIVNGIYRIVINQILQSPGIYYRSELDHNGISVYTGTIISDWGGRLELEIDRKARIWARVSRKQKISILVLSSAMGSNLREILENVCYPEIFLSFLNDKEKKKIGSKENAILEFYQQFACVGGDPVFSESLCKELQKKFFQQRCELGRIGRRNMNRRLNLDIPQNNTFLLPRDILAAADHLIGMKFGMGTLDDMNHLKNKRIRSVADLLQDQFGLALVRLENVVKGTICGAIRHKLIPTPQNLVTSTPLTTTYESFFGLHPLSQVLDRTNPLTQIVHGRKLSYLGPGGLTGRTASFRIRDIHPSHYGRICPIDTSEGINVGLIGSLAIHARIGQGGSLESPFYEISERSKSKKVRMLYLSPSRDEYYMIAAGNSLALNQRIQEEQVVPARYRQEFLTIAWEQVNLRSIFPFQYFSIGASLIPFIEHNDANRALMSSNMQRQAVPLSRSEKCIVGTGLERQAALDSGVTAIAEHEGKIIYTNTDKIILLGNGDTLSIPLVMYQRSNKNTCMHQKPQVPRGKCIKKGQILADGAATVGGELALGKNVLVAYLPWEGYNFEDAVLISERLVYEDIYTSFHIRKYEIQTHVTSQGPERITNEIPHLEAHLLRNLDKNGIVMLGSWVEAGDVLVGKLTPQTAKESSYAPEDRLLRAILGIQVSTSKETCLKLPIGGRGRVIDVRWIQKKGGSNYNPETICVYILQKREIKVGDKVAGRHGNKGIISKILPRQDMPYLQDGRPVDMVFNPLGVPSRMNVGQIFECSLGLAGDLLDRHYRIAPFDERYEQEASRKLVFSELYEASQQTANPWVFEPEYPGKSRIFDGRTGDPFEQPVIIGKPYILKLIHQVDDKIHGRSSGHYALVTQQPLRGRAKQGGQRVGEMEVWALEGFGVAHILQEMLTYKSDHIRARQEVLGTTIIGGTIPKPKDAPESFRLLVRELRSLSLELNHFLVSEKNFQINRKEA.

This sequence belongs to the RNA polymerase beta chain family. In terms of assembly, in plastids the minimal PEP RNA polymerase catalytic core is composed of four subunits: alpha, beta, beta', and beta''. When a (nuclear-encoded) sigma factor is associated with the core the holoenzyme is formed, which can initiate transcription.

It localises to the plastid. The protein resides in the chloroplast. The catalysed reaction is RNA(n) + a ribonucleoside 5'-triphosphate = RNA(n+1) + diphosphate. DNA-dependent RNA polymerase catalyzes the transcription of DNA into RNA using the four ribonucleoside triphosphates as substrates. This chain is DNA-directed RNA polymerase subunit beta, found in Eucalyptus globulus subsp. globulus (Tasmanian blue gum).